We begin with the raw amino-acid sequence, 429 residues long: Adenylosuccinate synthetase (429 aa).

Residues 12–18 (GDEGKGK) and 40–42 (GHT) each bind GTP. D13 (proton acceptor) is an active-site residue. Positions 13 and 40 each coordinate Mg(2+). IMP contacts are provided by residues 13 to 16 (DEGK), 38 to 41 (NAGH), T128, R142, Q223, T238, and R302. H41 acts as the Proton donor in catalysis. Position 298-304 (298-304 (VNTGRPR)) interacts with substrate. GTP-binding positions include R304, 330–332 (KLD), and 412–414 (GVG).

Belongs to the adenylosuccinate synthetase family. As to quaternary structure, homodimer. It depends on Mg(2+) as a cofactor.

Its subcellular location is the cytoplasm. The catalysed reaction is IMP + L-aspartate + GTP = N(6)-(1,2-dicarboxyethyl)-AMP + GDP + phosphate + 2 H(+). Its pathway is purine metabolism; AMP biosynthesis via de novo pathway; AMP from IMP: step 1/2. In terms of biological role, plays an important role in the de novo pathway of purine nucleotide biosynthesis. Catalyzes the first committed step in the biosynthesis of AMP from IMP. The protein is Adenylosuccinate synthetase of Pseudarthrobacter chlorophenolicus (strain ATCC 700700 / DSM 12829 / CIP 107037 / JCM 12360 / KCTC 9906 / NCIMB 13794 / A6) (Arthrobacter chlorophenolicus).